The chain runs to 348 residues: Macrophage-capping protein (348 aa).

Met1 carries the N-acetylmethionine modification. The Gelsolin-like 1 repeat unit spans residues 27–75 (EKLKPVPVAQENQGVFFSGDSYLVLHNGPEEVSHLHLWIGQQSSRDEQG). Positions 137–146 (KKLYQVKGKK) match the Nuclear localization signal motif. Gelsolin-like repeat units lie at residues 148 to 188 (IRAT…LERN) and 261 to 307 (MNLT…KERQ). Residue Ser337 is modified to Phosphoserine.

It belongs to the villin/gelsolin family. Interacts with NUP62. Interacts with NUTF2 and RAN; involved in CAPG nuclear import. Post-translationally, the N-terminus is blocked. As to expression, macrophages and macrophage-like cells.

The protein localises to the nucleus. Its subcellular location is the cytoplasm. It is found in the melanosome. The protein resides in the cell projection. It localises to the lamellipodium. The protein localises to the ruffle. In terms of biological role, calcium-sensitive protein which reversibly blocks the barbed ends of actin filaments but does not sever preformed actin filaments. May play an important role in macrophage function. May play a role in regulating cytoplasmic and/or nuclear structures through potential interactions with actin. May bind DNA. The sequence is that of Macrophage-capping protein (CAPG) from Homo sapiens (Human).